The following is a 386-amino-acid chain: uncharacterized protein (386 aa).

In terms of domain architecture, F-box spans 29 to 76; sequence KYWKFLNEDCKIEVLKYLDYCSRCQLSICSKSDHKLVSITPLYVYEIE.

This is an uncharacterized protein from Caenorhabditis elegans.